Consider the following 173-residue polypeptide: Avenin-like a5 (173 aa).

The N-terminal stretch at 1–19 (MKTMLILALIALAATSVVA) is a signal peptide.

The protein belongs to the prolamin family. In terms of processing, contains 7 disulfide bonds.

In terms of biological role, seed storage protein. Not integrated in the gluten polymer through disulfide bonds, unless incorporated by reduction and reoxidation during dough making. Increases dough strength and bread volume, but decreases dough stability when added into a base wheat flour. This Triticum aestivum (Wheat) protein is Avenin-like a5.